The chain runs to 391 residues: Phosphoglycerate kinase (391 aa).

Residues 23–25, R38, 61–64, R117, and R150 contribute to the substrate site; these read DFN and HLGK. Residues K201, G291, E322, and 348–351 contribute to the ATP site; that span reads GGDS.

It belongs to the phosphoglycerate kinase family. As to quaternary structure, monomer.

It is found in the cytoplasm. The enzyme catalyses (2R)-3-phosphoglycerate + ATP = (2R)-3-phospho-glyceroyl phosphate + ADP. It functions in the pathway carbohydrate degradation; glycolysis; pyruvate from D-glyceraldehyde 3-phosphate: step 2/5. The polypeptide is Phosphoglycerate kinase (Clostridium beijerinckii (strain ATCC 51743 / NCIMB 8052) (Clostridium acetobutylicum)).